Consider the following 373-residue polypeptide: Transmembrane protein adipocyte-associated 1 (373 aa).

Asparagine 11 and asparagine 23 each carry an N-linked (GlcNAc...) asparagine glycan. 7 helical membrane passes run 48–68 (LLLL…LPSA), 76–96 (SSPI…VGIA), 123–143 (FFLL…GHLE), 151–171 (VLAI…TLEI), 192–212 (QFWL…VILP), 234–254 (ILAL…FDII), and 265–285 (FLYF…GFFG). An N-linked (GlcNAc...) asparagine glycan is attached at asparagine 361.

The protein belongs to the UPF0359 family. As to expression, ubiquitous, with higher levels in heart, placenta and kidney.

It is found in the membrane. The protein is Transmembrane protein adipocyte-associated 1 (TPRA1) of Homo sapiens (Human).